A 418-amino-acid chain; its full sequence is Maltoporin (418 aa).

The signal sequence occupies residues 1–26 (MLPMNRNTLGLAVTIATVFVSSTVTA).

Belongs to the porin LamB (TC 1.B.3) family. As to quaternary structure, homotrimer formed of three 18-stranded antiparallel beta-barrels, containing three independent channels.

It localises to the cell outer membrane. It carries out the reaction beta-maltose(in) = beta-maltose(out). In terms of biological role, involved in the transport of maltose and maltodextrins. This chain is Maltoporin, found in Photobacterium profundum (strain SS9).